A 337-amino-acid polypeptide reads, in one-letter code: Retrovirus-related Pol polyprotein from type-1 retrotransposable element R1 (337 aa).

The Reverse transcriptase domain occupies G1 to M118. The segment at K253 to D337 is nucleic acid-binding endonuclease.

The catalysed reaction is DNA(n) + a 2'-deoxyribonucleoside 5'-triphosphate = DNA(n+1) + diphosphate. The protein is Retrovirus-related Pol polyprotein from type-1 retrotransposable element R1 of Nasonia vitripennis (Parasitic wasp).